The chain runs to 363 residues: Glutamate 5-kinase (363 aa).

Lys6 is an ATP binding site. The substrate site is built by Ser46, Asp133, and Asn145. Residues 165–166 (TD) and 207–213 (TGGMHTK) contribute to the ATP site. The 79-residue stretch at 271–349 (HGRLLLDGGA…REIEALLGYT (79 aa)) folds into the PUA domain.

It belongs to the glutamate 5-kinase family.

The protein resides in the cytoplasm. The enzyme catalyses L-glutamate + ATP = L-glutamyl 5-phosphate + ADP. The protein operates within amino-acid biosynthesis; L-proline biosynthesis; L-glutamate 5-semialdehyde from L-glutamate: step 1/2. Functionally, catalyzes the transfer of a phosphate group to glutamate to form L-glutamate 5-phosphate. The protein is Glutamate 5-kinase of Deinococcus radiodurans (strain ATCC 13939 / DSM 20539 / JCM 16871 / CCUG 27074 / LMG 4051 / NBRC 15346 / NCIMB 9279 / VKM B-1422 / R1).